Here is a 180-residue protein sequence, read N- to C-terminus: Probable Brix domain-containing ribosomal biogenesis protein (180 aa).

One can recognise a Brix domain in the interval 1 to 178 (MTTSRRPSPR…KPAEMVKRGR (178 aa)).

Its function is as follows. Probably involved in the biogenesis of the ribosome. The polypeptide is Probable Brix domain-containing ribosomal biogenesis protein (Aeropyrum pernix (strain ATCC 700893 / DSM 11879 / JCM 9820 / NBRC 100138 / K1)).